The chain runs to 541 residues: L-ornithine N(5)-monooxygenase (541 aa).

FAD contacts are provided by residues 50 to 58 (EKQPEFQWH) and Gln-69. Lys-74 contacts substrate. 223-226 (SGQS) contributes to the NADP(+) binding site. Residues 269-272 (NEIF) and Asn-300 each bind substrate. 300–302 (NYS) is a binding site for NADP(+). Residues 430 to 474 (TEIPKGPDGSLFDASEEEATWRPASPITPASPSPPSTPTSSALSQ) are disordered. Position 520 to 522 (520 to 522 (SLL)) interacts with FAD. Substrate is bound at residue Ser-523.

It belongs to the lysine N(6)-hydroxylase/L-ornithine N(5)-oxygenase family. Homotetramer. It depends on FAD as a cofactor.

It catalyses the reaction L-ornithine + NADPH + O2 = N(5)-hydroxy-L-ornithine + NADP(+) + H2O. The enzyme catalyses L-ornithine + NADH + O2 = N(5)-hydroxy-L-ornithine + NAD(+) + H2O. It participates in siderophore biosynthesis. In terms of biological role, L-ornithine N(5)-monooxygenase; part of the siderophore basidioferrin biosynthetic pathway. The biosynthesis of basidioferrin depends on the hydroxylation of ornithine to N(5)-hydroxyornithine, catalyzed by the monooxygenase SMO1. The second step, the acylation of N(5)-hydroxy-L-ornithine is catalyzed by a not yet identified N-acyltransferase. Finally, assembly of basidioferrin is catalyzed by the nonribosomal peptide synthase (NRPS) NPS2 via amide bond formation between three L-AHO molecules to release the linear L-AHO trimer. This Ceriporiopsis subvermispora (strain B) (White-rot fungus) protein is L-ornithine N(5)-monooxygenase (SMO1).